The following is a 192-amino-acid chain: Protein CREG1 (192 aa).

The N-terminal stretch at 1–18 (MVLLAFLCAAALAALARG) is a signal peptide. N-linked (GlcNAc...) asparagine glycosylation is found at N95, N133, and N166.

This sequence belongs to the CREG family.

The protein localises to the secreted. Its function is as follows. May contribute to the transcriptional control of cell growth and differentiation. This Gallus gallus (Chicken) protein is Protein CREG1 (CREG1).